Reading from the N-terminus, the 198-residue chain is Recombination protein RecR (198 aa).

A C4-type zinc finger spans residues 59 to 74; sequence CSLCCNYTDHDPCPIC. In terms of domain architecture, Toprim spans 82-175; sequence TLLCIVEQPR…KVTRIAHGLP (94 aa).

Belongs to the RecR family.

Functionally, may play a role in DNA repair. It seems to be involved in an RecBC-independent recombinational process of DNA repair. It may act with RecF and RecO. This chain is Recombination protein RecR, found in Desulfitobacterium hafniense (strain Y51).